Consider the following 516-residue polypeptide: UDP-N-acetylmuramyl-tripeptide synthetase (516 aa).

Ser-36 contacts UDP-N-acetyl-alpha-D-muramoyl-L-alanyl-D-glutamate. Residue 113-119 coordinates ATP; it reads GTKGKTT. Residues 159–160, Ser-186, and Arg-194 each bind UDP-N-acetyl-alpha-D-muramoyl-L-alanyl-D-glutamate; that span reads TT. N6-carboxylysine is present on Lys-228.

Belongs to the MurCDEF family. MurE subfamily. Post-translationally, carboxylation is probably crucial for Mg(2+) binding and, consequently, for the gamma-phosphate positioning of ATP.

It is found in the cytoplasm. It functions in the pathway cell wall biogenesis; peptidoglycan biosynthesis. In terms of biological role, catalyzes the addition of an amino acid to the nucleotide precursor UDP-N-acetylmuramoyl-L-alanyl-D-glutamate (UMAG) in the biosynthesis of bacterial cell-wall peptidoglycan. This Limosilactobacillus reuteri (strain DSM 20016) (Lactobacillus reuteri) protein is UDP-N-acetylmuramyl-tripeptide synthetase.